We begin with the raw amino-acid sequence, 21 residues long: GGPSQKQKQHKVNLVNIKVYI.

This sequence belongs to the tyrosinase family. Hemocyanin subfamily. As to expression, hemolymph.

It localises to the secreted. Its subcellular location is the extracellular space. In terms of biological role, hemocyanins are copper-containing oxygen carriers occurring freely dissolved in the hemolymph of many mollusks and arthropods. This Maja squinado (Mediterranean spider crab) protein is Hemocyanin subunit 6.